We begin with the raw amino-acid sequence, 103 residues long: Large ribosomal subunit protein bL21 (103 aa).

It belongs to the bacterial ribosomal protein bL21 family. In terms of assembly, part of the 50S ribosomal subunit. Contacts protein L20.

Its function is as follows. This protein binds to 23S rRNA in the presence of protein L20. The sequence is that of Large ribosomal subunit protein bL21 from Clostridium beijerinckii (strain ATCC 51743 / NCIMB 8052) (Clostridium acetobutylicum).